A 63-amino-acid chain; its full sequence is Cytochrome c oxidase subunit 7C, mitochondrial (63 aa).

Residues 1–16 (MLGQSIRRFTTSVVRR) constitute a mitochondrion transit peptide. Residues 17–33 (SHYEEGPGKNLPFSVEN) lie on the Mitochondrial matrix side of the membrane. N6-acetyllysine; alternate is present on Lys-25. Lys-25 carries the N6-succinyllysine; alternate modification. A helical transmembrane segment spans residues 34 to 60 (KWSLLAKMCLYFGSAFATPFLIVRHQL). Residues 61–63 (LKT) are Mitochondrial intermembrane-facing.

Belongs to the cytochrome c oxidase VIIc family. As to quaternary structure, component of the cytochrome c oxidase (complex IV, CIV), a multisubunit enzyme composed of 14 subunits. The complex is composed of a catalytic core of 3 subunits MT-CO1, MT-CO2 and MT-CO3, encoded in the mitochondrial DNA, and 11 supernumerary subunits COX4I, COX5A, COX5B, COX6A, COX6B, COX6C, COX7A, COX7B, COX7C, COX8 and NDUFA4, which are encoded in the nuclear genome. The complex exists as a monomer or a dimer and forms supercomplexes (SCs) in the inner mitochondrial membrane with NADH-ubiquinone oxidoreductase (complex I, CI) and ubiquinol-cytochrome c oxidoreductase (cytochrome b-c1 complex, complex III, CIII), resulting in different assemblies (supercomplex SCI(1)III(2)IV(1) and megacomplex MCI(2)III(2)IV(2)). Interacts with RAB5IF.

The protein resides in the mitochondrion inner membrane. The protein operates within energy metabolism; oxidative phosphorylation. Its function is as follows. Component of the cytochrome c oxidase, the last enzyme in the mitochondrial electron transport chain which drives oxidative phosphorylation. The respiratory chain contains 3 multisubunit complexes succinate dehydrogenase (complex II, CII), ubiquinol-cytochrome c oxidoreductase (cytochrome b-c1 complex, complex III, CIII) and cytochrome c oxidase (complex IV, CIV), that cooperate to transfer electrons derived from NADH and succinate to molecular oxygen, creating an electrochemical gradient over the inner membrane that drives transmembrane transport and the ATP synthase. Cytochrome c oxidase is the component of the respiratory chain that catalyzes the reduction of oxygen to water. Electrons originating from reduced cytochrome c in the intermembrane space (IMS) are transferred via the dinuclear copper A center (CU(A)) of subunit 2 and heme A of subunit 1 to the active site in subunit 1, a binuclear center (BNC) formed by heme A3 and copper B (CU(B)). The BNC reduces molecular oxygen to 2 water molecules using 4 electrons from cytochrome c in the IMS and 4 protons from the mitochondrial matrix. This Pongo pygmaeus (Bornean orangutan) protein is Cytochrome c oxidase subunit 7C, mitochondrial (COX7C).